Reading from the N-terminus, the 35-residue chain is Jingzhaotoxin F6-27.63 (35 aa).

3 disulfide bridges follow: cysteine 2-cysteine 17, cysteine 9-cysteine 22, and cysteine 16-cysteine 29.

It belongs to the neurotoxin 10 (Hwtx-1) family. 49 (Jztx-F6) subfamily. As to expression, expressed by the venom gland.

The protein localises to the secreted. Probable ion channel inhibitor. In Chilobrachys guangxiensis (Chinese earth tiger tarantula), this protein is Jingzhaotoxin F6-27.63.